The primary structure comprises 417 residues: Gamma-glutamyl phosphate reductase (417 aa).

Belongs to the gamma-glutamyl phosphate reductase family.

The protein resides in the cytoplasm. It catalyses the reaction L-glutamate 5-semialdehyde + phosphate + NADP(+) = L-glutamyl 5-phosphate + NADPH + H(+). The protein operates within amino-acid biosynthesis; L-proline biosynthesis; L-glutamate 5-semialdehyde from L-glutamate: step 2/2. Its function is as follows. Catalyzes the NADPH-dependent reduction of L-glutamate 5-phosphate into L-glutamate 5-semialdehyde and phosphate. The product spontaneously undergoes cyclization to form 1-pyrroline-5-carboxylate. The sequence is that of Gamma-glutamyl phosphate reductase from Escherichia coli O45:K1 (strain S88 / ExPEC).